Here is a 291-residue protein sequence, read N- to C-terminus: Ribosomal RNA small subunit methyltransferase H (291 aa).

S-adenosyl-L-methionine-binding positions include Gly-36–His-38, Asp-55, Ala-90, Asp-102, and Gln-109.

It belongs to the methyltransferase superfamily. RsmH family.

The protein localises to the cytoplasm. It carries out the reaction cytidine(1402) in 16S rRNA + S-adenosyl-L-methionine = N(4)-methylcytidine(1402) in 16S rRNA + S-adenosyl-L-homocysteine + H(+). Its function is as follows. Specifically methylates the N4 position of cytidine in position 1402 (C1402) of 16S rRNA. The sequence is that of Ribosomal RNA small subunit methyltransferase H from Thermosipho africanus (strain TCF52B).